The primary structure comprises 137 residues: S-adenosylmethionine decarboxylase proenzyme (137 aa).

S63 acts as the Schiff-base intermediate with substrate; via pyruvic acid in catalysis. Residue S63 is modified to Pyruvic acid (Ser); by autocatalysis. The active-site Proton acceptor; for processing activity is H68. C83 acts as the Proton donor; for catalytic activity in catalysis.

The protein belongs to the prokaryotic AdoMetDC family. Type 1 subfamily. In terms of assembly, heterotetramer of two alpha and two beta chains arranged as a dimer of alpha/beta heterodimers. Requires pyruvate as cofactor. In terms of processing, is synthesized initially as an inactive proenzyme. Formation of the active enzyme involves a self-maturation process in which the active site pyruvoyl group is generated from an internal serine residue via an autocatalytic post-translational modification. Two non-identical subunits are generated from the proenzyme in this reaction, and the pyruvate is formed at the N-terminus of the alpha chain, which is derived from the carboxyl end of the proenzyme. The post-translation cleavage follows an unusual pathway, termed non-hydrolytic serinolysis, in which the side chain hydroxyl group of the serine supplies its oxygen atom to form the C-terminus of the beta chain, while the remainder of the serine residue undergoes an oxidative deamination to produce ammonia and the pyruvoyl group blocking the N-terminus of the alpha chain.

The enzyme catalyses S-adenosyl-L-methionine + H(+) = S-adenosyl 3-(methylsulfanyl)propylamine + CO2. It participates in amine and polyamine biosynthesis; S-adenosylmethioninamine biosynthesis; S-adenosylmethioninamine from S-adenosyl-L-methionine: step 1/1. In terms of biological role, catalyzes the decarboxylation of S-adenosylmethionine to S-adenosylmethioninamine (dcAdoMet), the propylamine donor required for the synthesis of the polyamines spermine and spermidine from the diamine putrescine. This Fervidobacterium nodosum (strain ATCC 35602 / DSM 5306 / Rt17-B1) protein is S-adenosylmethionine decarboxylase proenzyme.